The sequence spans 118 residues: Large ribosomal subunit protein bL20 (118 aa).

The protein belongs to the bacterial ribosomal protein bL20 family.

Its function is as follows. Binds directly to 23S ribosomal RNA and is necessary for the in vitro assembly process of the 50S ribosomal subunit. It is not involved in the protein synthesizing functions of that subunit. The chain is Large ribosomal subunit protein bL20 from Synechococcus sp. (strain JA-2-3B'a(2-13)) (Cyanobacteria bacterium Yellowstone B-Prime).